The sequence spans 344 residues: Dihydroorotase (344 aa).

Residues His14 and His16 each contribute to the Zn(2+) site. Residues 16 to 18 (HLR) and Asn42 contribute to the substrate site. Residues Lys100, His137, and His175 each coordinate Zn(2+). N6-carboxylysine is present on Lys100. His137 lines the substrate pocket. Leu220 provides a ligand contact to substrate. Asp248 is a Zn(2+) binding site. The active site involves Asp248. The substrate site is built by His252 and Ala264.

The protein belongs to the metallo-dependent hydrolases superfamily. DHOase family. Class II DHOase subfamily. Homodimer. The cofactor is Zn(2+).

The enzyme catalyses (S)-dihydroorotate + H2O = N-carbamoyl-L-aspartate + H(+). Its pathway is pyrimidine metabolism; UMP biosynthesis via de novo pathway; (S)-dihydroorotate from bicarbonate: step 3/3. Functionally, catalyzes the reversible cyclization of carbamoyl aspartate to dihydroorotate. The polypeptide is Dihydroorotase (Cupriavidus necator (strain ATCC 17699 / DSM 428 / KCTC 22496 / NCIMB 10442 / H16 / Stanier 337) (Ralstonia eutropha)).